Consider the following 566-residue polypeptide: Hemocyanin B chain (566 aa).

The cysteines at positions 82 and 87 are disulfide-linked. Cu cation contacts are provided by H183, H187, H213, H309, H313, and H347.

Belongs to the tyrosinase family. Hemocyanin subfamily. As to expression, hemolymph.

It localises to the secreted. Its subcellular location is the extracellular space. Functionally, hemocyanins are copper-containing oxygen carriers occurring freely dissolved in the hemolymph of many mollusks and arthropods. The polypeptide is Hemocyanin B chain (Astacus leptodactylus (Turkish narrow-clawed crayfish)).